Reading from the N-terminus, the 330-residue chain is Aspartate--ammonia ligase (330 aa).

It belongs to the class-II aminoacyl-tRNA synthetase family. AsnA subfamily.

The protein localises to the cytoplasm. The catalysed reaction is L-aspartate + NH4(+) + ATP = L-asparagine + AMP + diphosphate + H(+). Its pathway is amino-acid biosynthesis; L-asparagine biosynthesis; L-asparagine from L-aspartate (ammonia route): step 1/1. This chain is Aspartate--ammonia ligase, found in Pectobacterium carotovorum subsp. carotovorum (strain PC1).